The sequence spans 535 residues: GMP synthase [glutamine-hydrolyzing] (535 aa).

Residues 24–217 (KILIVDFGSQ…VRKVAGLKGD (194 aa)) form the Glutamine amidotransferase type-1 domain. Catalysis depends on C101, which acts as the Nucleophile. Catalysis depends on residues H191 and E193. The GMPS ATP-PPase domain maps to 218 to 410 (WTMRAFREEA…LGLPEVFVGR (193 aa)). 245 to 251 (SGGVDSA) serves as a coordination point for ATP.

As to quaternary structure, homodimer.

It carries out the reaction XMP + L-glutamine + ATP + H2O = GMP + L-glutamate + AMP + diphosphate + 2 H(+). The protein operates within purine metabolism; GMP biosynthesis; GMP from XMP (L-Gln route): step 1/1. Its function is as follows. Catalyzes the synthesis of GMP from XMP. This is GMP synthase [glutamine-hydrolyzing] from Rhodopseudomonas palustris (strain BisB18).